Reading from the N-terminus, the 121-residue chain is Large ribosomal subunit protein bL12 (121 aa).

Belongs to the bacterial ribosomal protein bL12 family. As to quaternary structure, homodimer. Part of the ribosomal stalk of the 50S ribosomal subunit. Forms a multimeric L10(L12)X complex, where L10 forms an elongated spine to which 2 to 4 L12 dimers bind in a sequential fashion. Binds GTP-bound translation factors.

Its function is as follows. Forms part of the ribosomal stalk which helps the ribosome interact with GTP-bound translation factors. Is thus essential for accurate translation. This is Large ribosomal subunit protein bL12 from Pseudomonas fluorescens (strain ATCC BAA-477 / NRRL B-23932 / Pf-5).